A 156-amino-acid polypeptide reads, in one-letter code: Small ribosomal subunit protein bS16 (156 aa).

A compositionally biased stretch (basic and acidic residues) spans 85–120 (GESGAEGTLKSKSEKEAFVAPERDSVILPEEPKQEE). The tract at residues 85 to 156 (GESGAEGTLK…APAEDAEKSE (72 aa)) is disordered. A compositionally biased stretch (acidic residues) spans 132 to 150 (PAEEAAEAPAEEAAEAPAE).

It belongs to the bacterial ribosomal protein bS16 family.

In Micrococcus luteus (strain ATCC 4698 / DSM 20030 / JCM 1464 / CCM 169 / CCUG 5858 / IAM 1056 / NBRC 3333 / NCIMB 9278 / NCTC 2665 / VKM Ac-2230) (Micrococcus lysodeikticus), this protein is Small ribosomal subunit protein bS16.